A 74-amino-acid polypeptide reads, in one-letter code: U4-theraphotoxin-Cg1a (74 aa).

A signal peptide spans 1-19 (MNATIFALLLLLNLAMHNA). Residues 20 to 39 (AEQSSETDMDDTLLIPEINR) constitute a propeptide that is removed on maturation. Disulfide bonds link cysteine 42/cysteine 56, cysteine 49/cysteine 61, and cysteine 55/cysteine 71.

It belongs to the neurotoxin 36 family. 01 subfamily. In terms of tissue distribution, expressed by the venom gland.

Its subcellular location is the secreted. Functionally, probable ion channel inhibitor. The chain is U4-theraphotoxin-Cg1a from Chilobrachys guangxiensis (Chinese earth tiger tarantula).